Here is a 309-residue protein sequence, read N- to C-terminus: Potassium channel subfamily K member 16 (309 aa).

At 1 to 13 the chain is on the cytoplasmic side; sequence MPSAGLCSCWGGR. Residues 14–34 form a helical membrane-spanning segment; the sequence is VLPLLLAYVCYLLLGATIFQL. Residues 98 to 116 constitute an intramembrane region (pore-forming); that stretch reads SFFFAGTVVTTIGYGNLAP. Residues Thr108, Ile109, Gly110, and Tyr111 each contribute to the K(+) site. The interval 108 to 113 is selectivity filter 1; it reads TIGYGN. A helical membrane pass occupies residues 120–140; that stretch reads AGQVFCVFYALLGIPLNVIFL. Topologically, residues 141–165 are cytoplasmic; that stretch reads NHLGTGLRAHLAAIERWEDRPRRSQ. A helical transmembrane segment spans residues 166 to 186; that stretch reads VLQVLGLALFLTLGTLVILIF. An intramembrane region (pore-forming) is located at residues 202–221; it reads GFYFAFITLSTIGFGDYVVG. Residues Thr212, Ile213, Gly214, and Phe215 each contribute to the K(+) site. Residues 212–217 are selectivity filter 2; that stretch reads TIGFGD. The helical transmembrane segment at 238 to 258 threads the bilayer; that stretch reads IWILLGLAWLALILPLGPLLL. The Cytoplasmic segment spans residues 259–309; the sequence is HRCCQLWLLSLRQGCGAKAAPGRRPRRGSTAARGVQVTPQDFPISKKGLGS.

This sequence belongs to the two pore domain potassium channel (TC 1.A.1.8) family. In terms of assembly, homodimer; disulfide-linked. Heterodimer with KCNK17 and KCNK5. In terms of tissue distribution, highly expressed in pancreas, in both endocrine (alpha, beta, gamma, delta, and epsilon) and exocrine (acinar and ductal) cells. Expressed in pacreatic beta-cells (at protein level). Expressed in pacreatic delta-cells (at protein level). Not detectable in the other tissues tested.

The protein resides in the endoplasmic reticulum membrane. It is found in the cell membrane. Its subcellular location is the mitochondrion inner membrane. The catalysed reaction is K(+)(in) = K(+)(out). It carries out the reaction Rb(+)(in) = Rb(+)(out). It catalyses the reaction Cs(+)(in) = Cs(+)(out). The channel conductance is stimulated by extracellular alkaline pH. Inhibited by Ba(2+) ions, quinine, quinidine, chloroform and halothane. In terms of biological role, k(+) channel that conducts voltage-dependent outward rectifying currents upon membrane depolarization. Voltage sensing is coupled to K(+) electrochemical gradient in an 'ion flux gating' mode where outward but not inward ion flow opens the gate. Homo- and heterodimerizes to form functional channels with distinct regulatory and gating properties. In pancreatic islets, conducts K(+) countercurrents for Ca(2+) release from the endoplasmic reticulum (ER) and regulates the frequency and duration of cytosolic Ca(2+) oscillations coupled to secretion of pancreatic hormones. In pancreatic beta cells, drives ER Ca(2+) efflux, which in turn activates Ca(2+)-dependent plasma membrane K(+) slow currents and cytosolic Ca(2+) influx, overall contributing to synchronous cytosolic Ca(2+) oscillations. Limits glucose-induced cytosolic Ca(2+) oscillations coupled to second-phase INS secretion. Contributes to beta cell adaptation to acute inflammation by maintaining normal cytosolic Ca(2+) levels and INS secretion. May regulate beta cell mitochondrial Ca(2+) levels either indirectly via ER Ca(2+) efflux or directly by hyperpolarizing the mitochondrial membrane potential. Limits mitochondrial Ca(2+) oscillations and ATP production involved in glucose homeostasis upon metabolic stress. In pancreatic delta cells, limits Ca(2+)-induced Ca(2+)-release involved in somatostatin secretion and modulates islet paracrine signaling involved in glucagon secretion. Permeable to other monovalent cations such as Rb(+) and Cs(+). The chain is Potassium channel subfamily K member 16 from Homo sapiens (Human).